The chain runs to 151 residues: Large ribosomal subunit protein bL9 (151 aa).

Belongs to the bacterial ribosomal protein bL9 family.

In terms of biological role, binds to the 23S rRNA. In Rhodococcus erythropolis (strain PR4 / NBRC 100887), this protein is Large ribosomal subunit protein bL9.